A 79-amino-acid polypeptide reads, in one-letter code: NADH-ubiquinone oxidoreductase chain 5 (79 aa).

Helical transmembrane passes span 5-27 (TPIM…TNPY) and 40-57 (VMYA…FILS).

It belongs to the complex I subunit 5 family. Core subunit of respiratory chain NADH dehydrogenase (Complex I) which is composed of 45 different subunits.

Its subcellular location is the mitochondrion inner membrane. It catalyses the reaction a ubiquinone + NADH + 5 H(+)(in) = a ubiquinol + NAD(+) + 4 H(+)(out). Core subunit of the mitochondrial membrane respiratory chain NADH dehydrogenase (Complex I) which catalyzes electron transfer from NADH through the respiratory chain, using ubiquinone as an electron acceptor. Essential for the catalytic activity and assembly of complex I. The chain is NADH-ubiquinone oxidoreductase chain 5 (MT-ND5) from Macaca fascicularis (Crab-eating macaque).